Consider the following 447-residue polypeptide: Probable glycosyltransferase 7 (447 aa).

The disordered stretch occupies residues 1–31; sequence MRATTGARHLHPPWRRGLRHHRQSTMPPRAS. At 1–37 the chain is on the cytoplasmic side; that stretch reads MRATTGARHLHPPWRRGLRHHRQSTMPPRASRGRLAD. Residues 8-23 are compositionally biased toward basic residues; the sequence is RHLHPPWRRGLRHHRQ. A helical; Signal-anchor for type II membrane protein transmembrane segment spans residues 38 to 60; that stretch reads AALFTAGAVLGSVLLLTLASPFS. Residues 61 to 447 are Lumenal-facing; sequence SSSSPSSGVG…LPFDHPTQTA (387 aa). N-linked (GlcNAc...) asparagine glycosylation is found at N285 and N329.

This sequence belongs to the glycosyltransferase 34 family.

The protein resides in the golgi apparatus membrane. Its function is as follows. Probable glycosyltransferase that may be involved in the biosynthesis of xyloglucan. This is Probable glycosyltransferase 7 from Oryza sativa subsp. indica (Rice).